Here is a 695-residue protein sequence, read N- to C-terminus: G-protein coupled receptor-associated protein LMBRD2 (695 aa).

Residues 1-5 lie on the Extracellular side of the membrane; the sequence is MSGAA. A helical membrane pass occupies residues 6-21; sequence LGLEIVFVFFLALFLL. The Cytoplasmic segment spans residues 22-32; the sequence is HRYGDFKKQHR. Residues 33–53 form a helical membrane-spanning segment; that stretch reads LVIIGTLLAWYLCFLIVFILP. Over 54 to 105 the chain is Extracellular; that stretch reads LDVSTTIYNRCKHAAANSSPPENSNITGLYATANPVPSQHPCFKPWSYIPDG. An N-linked (GlcNAc...) asparagine glycan is attached at Asn78. Residues 106-126 form a helical membrane-spanning segment; that stretch reads IMPIFWRVVYWTSQFLTWILL. At 127-150 the chain is on the cytoplasmic side; that stretch reads PFMQSYARSGGFSITGKIKTALIE. A helical transmembrane segment spans residues 151-171; the sequence is NAIYYGTYLLIFGAFLIYVAV. Residues 172-186 lie on the Extracellular side of the membrane; that stretch reads NPHLHLEWNQLQTIG. A helical transmembrane segment spans residues 187–207; the sequence is IAAANTWGLFLLVLLLGYGLV. Topologically, residues 208–387 are cytoplasmic; that stretch reads EIPRSYWNGA…ECLLRPWFYK (180 aa). The stretch at 227-262 forms a coiled coil; it reads YFKAAKLMTEKADAEENLEDAMEEVRKVNESIKYNH. Residues 388-408 traverse the membrane as a helical segment; the sequence is ILAVVLSIFSVIVVWSECTFF. Residues 409–432 are Extracellular-facing; that stretch reads STTPVLSLFAVFIQLAEKTYNYIY. The helical transmembrane segment at 433–453 threads the bilayer; it reads IEIACFLSIFFLSICVYSTVF. Residues 454–473 lie on the Cytoplasmic side of the membrane; the sequence is RIRVFNYYYLASHHQTDAYS. Residues 474-494 traverse the membrane as a helical segment; that stretch reads LLFSGMLFCRLTPPLCLNFLG. The Extracellular segment spans residues 495–521; the sequence is LTHMDSSISHKNTQPTAYTSIMGSMKV. A helical membrane pass occupies residues 522–542; sequence LSFIADGFYIYYPMLVVILCI. Residues 543–695 lie on the Cytoplasmic side of the membrane; that stretch reads ATYFSLGTRC…MSRSDIFNDV (153 aa). A coiled-coil region spans residues 571-603; sequence LVNEGKELIRKEKRKRQRQEEGENRRREWKERY. The segment at 581-628 is disordered; it reads KEKRKRQRQEEGENRRREWKERYGHNREDSTRNRNIHTDPKESNFSDV. Positions 588–624 are enriched in basic and acidic residues; it reads RQEEGENRRREWKERYGHNREDSTRNRNIHTDPKESN. Ser633 is subject to Phosphoserine. Residues 662-682 are disordered; it reads AETFTDDPLESESGRYQPGGR.

It belongs to the LIMR family.

It localises to the cell membrane. In terms of biological role, recruited to ligand-activated beta-2 adrenergic receptor/ADRB2, it negatively regulates the adrenergic receptor signaling pathway. May also regulate other G-protein coupled receptors including type-1 angiotensin II receptor/AGTR1. The sequence is that of G-protein coupled receptor-associated protein LMBRD2 from Homo sapiens (Human).